A 425-amino-acid polypeptide reads, in one-letter code: Bifunctional phosphoribosylaminoimidazole carboxylase/phosphoribosylaminoimidazole succinocarboxamide synthetase (425 aa).

A2 carries the N-acetylalanine modification. Residues 2–260 (ATAEVLNIGK…WVAERVELLL (259 aa)) are SAICAR synthetase domain. At Y22 the chain carries Phosphotyrosine. A Phosphoserine modification is found at S27. At K36 the chain carries N6-acetyllysine. A Phosphoserine modification is found at S107. Position 238 is a phosphothreonine (T238). K247 bears the N6-acetyllysine mark. The interval 261-266 (KSESQC) is linker. The tract at residues 267 to 425 (RVVVLMGSTS…ADKKIRECNL (159 aa)) is AIR carboxylase domain. S274 is modified (phosphoserine). S332 serves as a coordination point for CO2.

In the N-terminal section; belongs to the SAICAR synthetase family. The protein in the C-terminal section; belongs to the AIR carboxylase family. Class II subfamily. As to quaternary structure, homooctamer.

It catalyses the reaction 5-amino-1-(5-phospho-D-ribosyl)imidazole-4-carboxylate + L-aspartate + ATP = (2S)-2-[5-amino-1-(5-phospho-beta-D-ribosyl)imidazole-4-carboxamido]succinate + ADP + phosphate + 2 H(+). It carries out the reaction 5-amino-1-(5-phospho-D-ribosyl)imidazole-4-carboxylate + H(+) = 5-amino-1-(5-phospho-beta-D-ribosyl)imidazole + CO2. It functions in the pathway purine metabolism; IMP biosynthesis via de novo pathway; 5-amino-1-(5-phospho-D-ribosyl)imidazole-4-carboxamide from 5-amino-1-(5-phospho-D-ribosyl)imidazole-4-carboxylate: step 1/2. Its pathway is purine metabolism; IMP biosynthesis via de novo pathway; 5-amino-1-(5-phospho-D-ribosyl)imidazole-4-carboxylate from 5-amino-1-(5-phospho-D-ribosyl)imidazole (carboxylase route): step 1/1. In terms of biological role, bifunctional phosphoribosylaminoimidazole carboxylase and phosphoribosylaminoimidazole succinocarboxamide synthetase catalyzing two reactions of the de novo purine biosynthetic pathway. The chain is Bifunctional phosphoribosylaminoimidazole carboxylase/phosphoribosylaminoimidazole succinocarboxamide synthetase from Homo sapiens (Human).